A 241-amino-acid chain; its full sequence is MAGHSKWANIQHRKGRQDAKRGKVFTKLIKEVTVAAKMGGGDPNANPRLRLAIDKAKAESMPKDNIENAIKRGTGQLEGVTYEEARYEGYGIAGAAVMVDCLTDNKTRTVADVRHAFSKYGGNMGTDGCVAFQFKHCGQLMFAPGTDEDALMEAALEAGAEDVVANDDGSIEVITGPWEFTTVKETLEKAGFTAEFGEVTMKAQNETELSGDDAARMQKLLDALESLDDVQEVYTSAVLDE.

Residues 1–21 (MAGHSKWANIQHRKGRQDAKR) form a disordered region.

Belongs to the TACO1 family.

It localises to the cytoplasm. This is Probable transcriptional regulatory protein azo0574 from Azoarcus sp. (strain BH72).